A 324-amino-acid polypeptide reads, in one-letter code: Antihemorrhagic factor cMSF (324 aa).

The N-terminal stretch at 1-19 (MHFLVALVLLGQIIGSTLS) is a signal peptide. Cystatin fetuin-A-type domains follow at residues 22–130 (VRGD…VKCH) and 141–254 (RNCL…SDCV). The Cell attachment site motif lies at 23–25 (RGD). Intrachain disulfides connect Cys-28–Cys-315, Cys-85–Cys-96, Cys-110–Cys-129, Cys-143–Cys-146, Cys-205–Cys-217, Cys-230–Cys-253, and Cys-287–Cys-291. A glycan (N-linked (GlcNAc...) asparagine) is linked at Asn-204. Asn-282 carries an N-linked (GlcNAc...) asparagine glycan.

In terms of assembly, homodimer. As to expression, expressed by the liver.

The protein localises to the secreted. Functionally, suppress hemorrhage induced by metalloproteinases from the same venom (brevilysin-H3, -H4, -H6) and from habu venom (metalloproteinases HR1A and HR1B). The non-hemorrhagic brevilysin-L4 is not inhibited by cMSF. Does not inhibit serine and cysteine proteases such as trypsin, chymotrypsin, thermolysin, and papain. The inhibition may occur by formation of a non-covalent complex between this protein and the proteinases at their metalloproteinase domains. This Gloydius brevicauda (Korean slamosa snake) protein is Antihemorrhagic factor cMSF.